The sequence spans 427 residues: Citrate synthase (427 aa).

Residues H306 and D363 contribute to the active site.

Belongs to the citrate synthase family. As to quaternary structure, homohexamer.

It catalyses the reaction oxaloacetate + acetyl-CoA + H2O = citrate + CoA + H(+). The protein operates within carbohydrate metabolism; tricarboxylic acid cycle; isocitrate from oxaloacetate: step 1/2. Allosterically inhibited by NADH. The sequence is that of Citrate synthase (gltA) from Salmonella typhimurium (strain LT2 / SGSC1412 / ATCC 700720).